Consider the following 196-residue polypeptide: Heat shock protein beta-8 (196 aa).

Residues 1 to 28 (MADGQLPFPCSYPSRLRRDPFRDSPLSS) are disordered. Phosphoserine occurs at positions 24 and 57. Threonine 63 bears the Phosphothreonine mark. Arginine 71 and arginine 78 each carry asymmetric dimethylarginine. The region spanning 78-185 (RFGVPAEGRS…PFGESSFNNE (108 aa)) is the sHSP domain. Serine 87 is subject to Phosphoserine. Residues 176 to 196 (PFGESSFNNELPQDNQEVTCS) form a disordered region. Residues 178–196 (GESSFNNELPQDNQEVTCS) show a composition bias toward polar residues.

It belongs to the small heat shock protein (HSP20) family. Monomer. Forms a ternary complex with BAG3 and HSPA1A. Component of the chaperone-assisted selective autophagy (CASA) complex consisting of BAG3, HSPA8/HSC70, HSPB8 and STUB1/CHIP. Interacts with HSPB1. Interacts with DNAJB6. Interacts with BAG3. Highly expressed in skeletal muscle, heart, uterus, liver, lung and ovary. Low levels found in stomach and brain. Not detected in small intestine, large intestine, kidney, spleen and testis. In the ovary, expression is concentrated in the endometrium and in the connective tissue between the circular and longitudinal muscles of the myometrium.

The protein resides in the cytoplasm. It is found in the nucleus. In terms of biological role, involved in the chaperone-assisted selective autophagy (CASA), a crucial process for protein quality control, particularly in mechanical strained cells and tissues such as muscle. Displays temperature-dependent chaperone activity. This is Heat shock protein beta-8 (Hspb8) from Mus musculus (Mouse).